The primary structure comprises 305 residues: Peroxisome assembly protein 26 (305 aa).

Residues 1 to 20 (MKSDSSTSAAPLRGLGGPLR) form a disordered region. Residues 1 to 246 (MKSDSSTSAA…RQLWDSAVSH (246 aa)) are Cytoplasmic-facing. The helical; Signal-anchor for type II membrane protein transmembrane segment at 247 to 267 (FFSLPFKKSLLAALILCLLVV) threads the bilayer. Residues 268-305 (RFDPASPSSLHFLYKLAQLFRWIRKAAFSRLYQLRIRD) are Peroxisomal matrix-facing.

This sequence belongs to the peroxin-26 family. Interacts (via its cytoplasmic domain) with PEX6; interaction is direct and is ATP-dependent. Interacts with PEX1; interaction is indirect and is mediated via interaction with PEX6. In terms of tissue distribution, widely expressed. Highly expressed in kidney, liver, brain and skeletal muscles. Expressed at intermediate level in pancreas, placenta and heart. Weakly expressed in lung.

It localises to the peroxisome membrane. In terms of biological role, peroxisomal docking factor that anchors PEX1 and PEX6 to peroxisome membranes. PEX26 is therefore required for the formation of the PEX1-PEX6 AAA ATPase complex, a complex that mediates the extraction of the PEX5 receptor from peroxisomal membrane. The protein is Peroxisome assembly protein 26 of Homo sapiens (Human).